A 545-amino-acid polypeptide reads, in one-letter code: Germacrene D synthase 1 (545 aa).

D298, D302, N443, and E451 together coordinate Mg(2+). The DDXXD motif signature appears at 298–302 (DDTFD).

This sequence belongs to the terpene synthase family. Mg(2+) is required as a cofactor.

The protein localises to the cytoplasm. Its subcellular location is the cytosol. It carries out the reaction (2E,6E)-farnesyl diphosphate = (-)-germacrene D + diphosphate. Its pathway is secondary metabolite biosynthesis; terpenoid biosynthesis. In terms of biological role, sesquiterpene synthase involved in germacrene D biosynthesis. Also produces at least 13 additional sesquiterpene products, including germacrene C and (+)-germacrene A, beta-ylangene, (E)-beta-farnesene and (E,E)-alpha-farnesene. This is Germacrene D synthase 1 from Pogostemon cablin (Patchouli).